A 725-amino-acid chain; its full sequence is MEPGDAARPGSGRATGAPPPRLLLLPLLLGWGLRVAAAASASSSGAAAEDSSAMEELATEKEAEESHRQDSVSLLTFILLLTLTILTIWLFKHRRVRFLHETGLAMIYGLIVGVILRYGTPATSGRDKSLSCTQEDRAFSTLLVNVSGKFFEYTLKGEISPGKINSVEQNDMLRKVTFDPEVFFNILLPPIIFHAGYSLKKRHFFRNLGSILAYAFLGTAVSCFIIGNLMYGVVKLMKIMGQLSDKFYYTDCLFFGAIISATDPVTVLAIFNELHADVDLYALLFGESVLNDAVAIVLSSSIVAYQPAGLNTHAFDAAAFFKSVGIFLGIFSGSFTMGAVTGVNANVTKFTKLHCFPLLETALFFLMSWSTFLLAEACGFTGVVAVLFCGITQAHYTYNNLSVESRSRTKQLFEVLHFLAENFIFSYMGLALFTFQKHVFSPIFIIGAFVAIFLGRAAHIYPLSFFLNLGRRHKIGWNFQHMMMFSGLRGAMAFALAIRDTASYARQMMFTTTLLIVFFTVWIIGGGTTPMLSWLNIRVGVEEPSEEDQNEHHWQYFRVGVDPDQDPPPNNDSFQVLQGDGPDSARGNRTKQESAWIFRLWYSFDHNYLKPILTHSGPPLTTTLPAWCGLLARCLTSPQVYDNQEPLREEDSDFILTEGDLTLTYGDSTVTANGSSSSHTASTSLEGSRRTKSSSEEVLERDLGMGDQKVSSRGTRLVFPLEDNA.

A disordered region spans residues 1–20 (MEPGDAARPGSGRATGAPPP). The Cytoplasmic portion of the chain corresponds to 1 to 21 (MEPGDAARPGSGRATGAPPPR). The chain crosses the membrane as a helical span at residues 22–42 (LLLLPLLLGWGLRVAAAASAS). At 43–70 (SSGAAAEDSSAMEELATEKEAEESHRQD) the chain is on the lumenal side. A helical membrane pass occupies residues 71-91 (SVSLLTFILLLTLTILTIWLF). Residues 92–95 (KHRR) are Cytoplasmic-facing. Residues 96-116 (VRFLHETGLAMIYGLIVGVIL) traverse the membrane as a helical segment. Topologically, residues 117-175 (RYGTPATSGRDKSLSCTQEDRAFSTLLVNVSGKFFEYTLKGEISPGKINSVEQNDMLRK) are lumenal. N-linked (GlcNAc...) asparagine glycosylation is present at Asn-145. A helical transmembrane segment spans residues 176–196 (VTFDPEVFFNILLPPIIFHAG). Over 197-210 (YSLKKRHFFRNLGS) the chain is Cytoplasmic. Residues 211-231 (ILAYAFLGTAVSCFIIGNLMY) traverse the membrane as a helical segment. Residues 232–251 (GVVKLMKIMGQLSDKFYYTD) are Lumenal-facing. A helical transmembrane segment spans residues 252–272 (CLFFGAIISATDPVTVLAIFN). Topologically, residues 273–277 (ELHAD) are cytoplasmic. A helical transmembrane segment spans residues 278-298 (VDLYALLFGESVLNDAVAIVL). The Lumenal segment spans residues 299-322 (SSSIVAYQPAGLNTHAFDAAAFFK). The helical transmembrane segment at 323–343 (SVGIFLGIFSGSFTMGAVTGV) threads the bilayer. Topologically, residues 344-349 (NANVTK) are cytoplasmic. Transmembrane regions (helical) follow at residues 350-370 (FTKL…MSWS) and 371-391 (TFLL…FCGI). Residues 392–414 (TQAHYTYNNLSVESRSRTKQLFE) lie on the Cytoplasmic side of the membrane. Residues 415-435 (VLHFLAENFIFSYMGLALFTF) traverse the membrane as a helical segment. Topologically, residues 436–442 (QKHVFSP) are lumenal. Residues 443-463 (IFIIGAFVAIFLGRAAHIYPL) traverse the membrane as a helical segment. The Cytoplasmic portion of the chain corresponds to 464–474 (SFFLNLGRRHK). A helical membrane pass occupies residues 475 to 497 (IGWNFQHMMMFSGLRGAMAFALA). Over 498–513 (IRDTASYARQMMFTTT) the chain is Lumenal. Residues 514-534 (LLIVFFTVWIIGGGTTPMLSW) traverse the membrane as a helical segment. Required for trans-Golgi network localization regions lie at residues 533-559 (SWLN…YFRV) and 563-568 (PDQDPP). Over 535-725 (LNIRVGVEEP…RLVFPLEDNA (191 aa)) the chain is Cytoplasmic. A Phosphoserine modification is found at Ser-545. Disordered regions lie at residues 567-590 (PPPN…GNRT) and 669-714 (TVTA…SSRG). The segment covering 675–684 (SSSSHTASTS) has biased composition (low complexity). The segment covering 687–704 (GSRRTKSSSEEVLERDLG) has biased composition (basic and acidic residues).

Belongs to the monovalent cation:proton antiporter 1 (CPA1) transporter (TC 2.A.36) family. Interacts with SCAMP1, SCAMP2 and SCAMP5; may participate in its shuttling from trans-Golgi network to recycling endosomes. Post-translationally, N-glycosylated. Ubiquitously expressed.

It localises to the golgi apparatus. The protein resides in the trans-Golgi network membrane. Its subcellular location is the recycling endosome membrane. It is found in the cell membrane. The catalysed reaction is Na(+)(in) + H(+)(out) = Na(+)(out) + H(+)(in). It catalyses the reaction K(+)(in) + H(+)(out) = K(+)(out) + H(+)(in). With respect to regulation, inhibited by benzamil and quinine but not by amiloride. In terms of biological role, golgi Na(+), K(+)/(H+) antiporter. Mediates the electoneutral influx of Na(+) or K(+) in exchange for H(+). May contribute to the regulation of Golgi apparatus volume and pH. The protein is Sodium/hydrogen exchanger 7 (SLC9A7) of Homo sapiens (Human).